The primary structure comprises 4083 residues: Dynein axonemal heavy chain 3 (4083 aa).

Disordered stretches follow at residues 1–37 and 111–132; these read MSDT…VSAN and DKTS…PSKK. Residues 1-1357 form a stem region; the sequence is MSDTNCSAQK…HVQMITTEAL (1357 aa). Coiled-coil stretches lie at residues 1026–1052 and 1108–1133; these read IKPI…AWLK and RMTE…YLEK. AAA stretches follow at residues 1358–1579, 1639–1870, 2003–2251, and 2362–2613; these read YGYE…VLTA, EALN…LHCK, TIPA…VIQG, and EFNS…LLRH. Residues 1396–1403, 1677–1684, 2041–2048, and 2401–2408 contribute to the ATP site; these read GPAGTGKT, GDPMGGKT, GPTGTGKS, and GIGGSGRQ. A stalk region spans residues 2628–2927; it reads FKTLLNSKRQ…NSLEKNIEIC (300 aa). A coiled-coil region spans residues 2651–2714; it reads QKLEFASSQV…DEKEANAAAA (64 aa). AAA regions lie at residues 3012–3242 and 3455–3679; these read LGDP…EISE and IQNF…QIQM.

It belongs to the dynein heavy chain family. In terms of assembly, consists of at least two heavy chains and a number of intermediate and light chains.

Its subcellular location is the cytoplasm. The protein localises to the cytoskeleton. It localises to the cilium axoneme. Functionally, force generating protein of respiratory cilia. Produces force towards the minus ends of microtubules. Dynein has ATPase activity; the force-producing power stroke is thought to occur on release of ADP. Involved in sperm motility; implicated in sperm flagellar assembly. The sequence is that of Dynein axonemal heavy chain 3 (Dnah3) from Mus musculus (Mouse).